Reading from the N-terminus, the 120-residue chain is Large ribosomal subunit protein uL22 (120 aa).

Belongs to the universal ribosomal protein uL22 family. In terms of assembly, part of the 50S ribosomal subunit.

Functionally, this protein binds specifically to 23S rRNA; its binding is stimulated by other ribosomal proteins, e.g. L4, L17, and L20. It is important during the early stages of 50S assembly. It makes multiple contacts with different domains of the 23S rRNA in the assembled 50S subunit and ribosome. The globular domain of the protein is located near the polypeptide exit tunnel on the outside of the subunit, while an extended beta-hairpin is found that lines the wall of the exit tunnel in the center of the 70S ribosome. In Corynebacterium kroppenstedtii (strain DSM 44385 / JCM 11950 / CIP 105744 / CCUG 35717), this protein is Large ribosomal subunit protein uL22.